The following is a 701-amino-acid chain: MARTTPISRYRNIGIVAHVDAGKTTTTERVLFYTGKSHKMGEVHDGAATTDWMVQEQERGITITSAAITAFWQGSEKQHKDQYRFNVIDTPGHVDFTIEVERSLRVLDGAVVVFCGTSGVEPQSETVWRQANKYGVPRIVYVNKMDRAGANFLRVIAQIKQRLGHTPVPIQLAIGAEDNFQGQIDLMAMEAVYWNDSDKGMVPVRKPIPAELQELADEWRGNMVEAAAEASEELMNKYLEGEELTNEEIKAALRQRTIAGEIVLAVCGSSFKNKGVPLVLDAVIDYLPAPIDIPAIKGSDPDNEEILMERHADDSEPFSALAFKIATDPFVGTLTFVRVYSGVLASGDGVINSVKGKKERVGRMVQMHANAREEIKEVRAGDIAALIGMKDVTTGETLCNADKPIILVRMDFPEPVISVAVEPKTKDDQEKMGIALGKLAQEDPSFRVKTDEETGQTIISGMGELHLDILVDRMRREFNVEANIGKPQVSYRERITKNCEIEGKFVRQSGGRGQFGHCWIRFAPADEGQEGLQFVNEVVGGVVPKEYIPAIQKGIEEQMKNGVVAGYPLIGLKATVFDGSYHDVDSNEMAFKVAASMATKQLAQKGGGELLEPIMAVEVVTPEDYMGDVMGDLNRRRGMILGMEDTVSGKVIRAEVPLGEMFGYATDVRSMSQGRASYSMEFKKYNTAPSHIVETVTKKQG.

The region spanning 8-291 is the tr-type G domain; sequence SRYRNIGIVA…AVIDYLPAPI (284 aa). GTP is bound by residues 17-24, 89-93, and 143-146; these read AHVDAGKT, DTPGH, and NKMD.

This sequence belongs to the TRAFAC class translation factor GTPase superfamily. Classic translation factor GTPase family. EF-G/EF-2 subfamily.

It localises to the cytoplasm. Its function is as follows. Catalyzes the GTP-dependent ribosomal translocation step during translation elongation. During this step, the ribosome changes from the pre-translocational (PRE) to the post-translocational (POST) state as the newly formed A-site-bound peptidyl-tRNA and P-site-bound deacylated tRNA move to the P and E sites, respectively. Catalyzes the coordinated movement of the two tRNA molecules, the mRNA and conformational changes in the ribosome. The sequence is that of Elongation factor G from Pseudomonas syringae pv. tomato (strain ATCC BAA-871 / DC3000).